The sequence spans 97 residues: Putative membrane protein insertion efficiency factor (97 aa).

A disordered region spans residues 72 to 97 (VPGAEPDQEQHQCTPLCNHHSEDHSQ).

This sequence belongs to the UPF0161 family.

Its subcellular location is the cell inner membrane. In terms of biological role, could be involved in insertion of integral membrane proteins into the membrane. The protein is Putative membrane protein insertion efficiency factor of Alcanivorax borkumensis (strain ATCC 700651 / DSM 11573 / NCIMB 13689 / SK2).